We begin with the raw amino-acid sequence, 725 residues long: Malate synthase G 2 (725 aa).

Acetyl-CoA is bound by residues valine 118, 125-126 (RY), serine 276, and arginine 313. Arginine 340 acts as the Proton acceptor in catalysis. Residues arginine 340, glutamate 429, and 454 to 457 (GFLD) each bind glyoxylate. The Mg(2+) site is built by glutamate 429 and aspartate 457. Proline 538 serves as a coordination point for acetyl-CoA. Residue cysteine 619 is modified to Cysteine sulfenic acid (-SOH). Aspartate 633 acts as the Proton donor in catalysis.

It belongs to the malate synthase family. GlcB subfamily. Monomer. Mg(2+) is required as a cofactor.

Its subcellular location is the cytoplasm. The catalysed reaction is glyoxylate + acetyl-CoA + H2O = (S)-malate + CoA + H(+). It participates in carbohydrate metabolism; glyoxylate cycle; (S)-malate from isocitrate: step 2/2. Involved in the glycolate utilization. Catalyzes the condensation and subsequent hydrolysis of acetyl-coenzyme A (acetyl-CoA) and glyoxylate to form malate and CoA. This Pseudomonas syringae pv. tomato (strain ATCC BAA-871 / DC3000) protein is Malate synthase G 2.